We begin with the raw amino-acid sequence, 266 residues long: Type III pantothenate kinase (266 aa).

6–13 lines the ATP pocket; it reads DVGNSHTV. Residue 112–115 coordinates substrate; the sequence is GIDR. D114 (proton acceptor) is an active-site residue. D134 serves as a coordination point for K(+). T137 contacts ATP. T190 contributes to the substrate binding site.

This sequence belongs to the type III pantothenate kinase family. Homodimer. NH4(+) serves as cofactor. It depends on K(+) as a cofactor.

It is found in the cytoplasm. The enzyme catalyses (R)-pantothenate + ATP = (R)-4'-phosphopantothenate + ADP + H(+). It participates in cofactor biosynthesis; coenzyme A biosynthesis; CoA from (R)-pantothenate: step 1/5. In terms of biological role, catalyzes the phosphorylation of pantothenate (Pan), the first step in CoA biosynthesis. This Desulfotalea psychrophila (strain LSv54 / DSM 12343) protein is Type III pantothenate kinase.